The primary structure comprises 59 residues: Membrane-associated ATPase epsilon chain (59 aa).

The protein to E.hirae NtpH. Sul-ATPase is composed of six (or maybe five) subunits: alpha, beta, delta, gamma, C (proteolipid), and possibly epsilon.

It catalyses the reaction ATP + H2O + 4 H(+)(in) = ADP + phosphate + 5 H(+)(out). The protein is Membrane-associated ATPase epsilon chain (atpE) of Sulfurisphaera tokodaii (strain DSM 16993 / JCM 10545 / NBRC 100140 / 7) (Sulfolobus tokodaii).